The primary structure comprises 203 residues: Glycerol-3-phosphate acyltransferase (203 aa).

The next 5 helical transmembrane spans lie at 10 to 30 (LLAL…GLLI), 59 to 79 (PAAA…VILA), 87 to 107 (AAQI…YLKF), 116 to 136 (FFGT…AIWL), and 168 to 188 (LVVL…ENII).

This sequence belongs to the PlsY family. In terms of assembly, probably interacts with PlsX.

It localises to the cell inner membrane. The enzyme catalyses an acyl phosphate + sn-glycerol 3-phosphate = a 1-acyl-sn-glycero-3-phosphate + phosphate. Its pathway is lipid metabolism; phospholipid metabolism. In terms of biological role, catalyzes the transfer of an acyl group from acyl-phosphate (acyl-PO(4)) to glycerol-3-phosphate (G3P) to form lysophosphatidic acid (LPA). This enzyme utilizes acyl-phosphate as fatty acyl donor, but not acyl-CoA or acyl-ACP. This chain is Glycerol-3-phosphate acyltransferase, found in Dinoroseobacter shibae (strain DSM 16493 / NCIMB 14021 / DFL 12).